A 301-amino-acid polypeptide reads, in one-letter code: GTPase Era (301 aa).

In terms of domain architecture, Era-type G spans 4–173; sequence KAGFVALIGK…LECISEHLSP (170 aa). Residues 12–19 form a G1 region; the sequence is GKPNAGKS. GTP is bound at residue 12 to 19; that stretch reads GKPNAGKS. The segment at 38–42 is G2; that stretch reads NATRK. The G3 stretch occupies residues 64-67; the sequence is DTPG. GTP-binding positions include 64-68 and 122-125; these read DTPGL and SKID. The tract at residues 122–125 is G4; the sequence is SKID. Residues 152-154 are G5; it reads LSA. The KH type-2 domain occupies 204-280; that stretch reads LSDEIPYESD…FLNLQVIAQK (77 aa).

It belongs to the TRAFAC class TrmE-Era-EngA-EngB-Septin-like GTPase superfamily. Era GTPase family. Monomer.

It localises to the cytoplasm. It is found in the cell inner membrane. Its function is as follows. An essential GTPase that binds both GDP and GTP, with rapid nucleotide exchange. Plays a role in 16S rRNA processing and 30S ribosomal subunit biogenesis and possibly also in cell cycle regulation and energy metabolism. The polypeptide is GTPase Era (Helicobacter acinonychis (strain Sheeba)).